The following is a 149-amino-acid chain: Nucleoside diphosphate kinase (149 aa).

ATP-binding residues include Lys-9, Phe-57, Arg-85, Thr-91, Arg-102, and Asn-112. His-115 (pros-phosphohistidine intermediate) is an active-site residue.

Belongs to the NDK family. As to quaternary structure, homotetramer. Mg(2+) is required as a cofactor.

The protein resides in the cytoplasm. It catalyses the reaction a 2'-deoxyribonucleoside 5'-diphosphate + ATP = a 2'-deoxyribonucleoside 5'-triphosphate + ADP. It carries out the reaction a ribonucleoside 5'-diphosphate + ATP = a ribonucleoside 5'-triphosphate + ADP. Functionally, major role in the synthesis of nucleoside triphosphates other than ATP. The ATP gamma phosphate is transferred to the NDP beta phosphate via a ping-pong mechanism, using a phosphorylated active-site intermediate. This chain is Nucleoside diphosphate kinase, found in Crocosphaera subtropica (strain ATCC 51142 / BH68) (Cyanothece sp. (strain ATCC 51142)).